Reading from the N-terminus, the 559-residue chain is Frizzled-1 (559 aa).

The signal sequence occupies residues 1–35; that stretch reads MKHSHLLQRCSAQLCTRGSSLILSLLLSVCLSVEG. Topologically, residues 36 to 239 are extracellular; it reads QYNGEKGISI…FAPEELNFAR (204 aa). Positions 46–165 constitute an FZ domain; that stretch reads PDHGYCQPIS…NGAGELCVGQ (120 aa). Intrachain disulfides connect cysteine 51-cysteine 112, cysteine 59-cysteine 105, cysteine 96-cysteine 133, cysteine 122-cysteine 162, and cysteine 126-cysteine 150. N-linked (GlcNAc...) asparagine glycosylation is present at asparagine 65. Residue asparagine 166 is glycosylated (N-linked (GlcNAc...) asparagine). The helical transmembrane segment at 240–260 threads the bilayer; it reads IWIGIWSVLCCASTLFTVLTY. The Cytoplasmic segment spans residues 261–273; it reads LVDMKRFSYPERP. The chain crosses the membrane as a helical span at residues 274-294; the sequence is IIFLSGCYTMVAIAYIAGFLL. The Extracellular segment spans residues 295–321; it reads EDKVVCNERFAEDGYKTVAQGTKKEGC. Residues 322-342 form a helical membrane-spanning segment; the sequence is TFLFMMLYFFSMASSIWWVIL. At 343 to 364 the chain is on the cytoplasmic side; that stretch reads SLTWFLAAGMKWGHEAIEANSQ. A helical membrane pass occupies residues 365-385; that stretch reads YFHLAAWAVPAIKTITILAVG. Residues 386-408 are Extracellular-facing; sequence QVDGDTLSGVCFVGINNVDALRG. Residues 409 to 429 traverse the membrane as a helical segment; sequence FVLAPLFVYLFIGTSFLLAGF. Residues 430-455 lie on the Cytoplasmic side of the membrane; the sequence is VSLFRIRTIMKHDGTKTEKLEKLMVR. A helical membrane pass occupies residues 456–476; that stretch reads IGIFSVLYTVPATIVIACYFY. The Extracellular segment spans residues 477–513; that stretch reads EQAFREQWEKSWISQSCKTYAIPCPSTGHPPMSPDFT. The chain crosses the membrane as a helical span at residues 514 to 534; sequence VFMIKYLMTLIVGITSGFWIW. At 535–559 the chain is on the cytoplasmic side; it reads SGKTLNSWRKFYTRLTNSKQGETTV. A Lys-Thr-X-X-X-Trp motif, mediates interaction with the PDZ domain of Dvl family members motif is present at residues 537–542; the sequence is KTLNSW. The short motif at 557-559 is the PDZ-binding element; the sequence is TTV.

This sequence belongs to the G-protein coupled receptor Fz/Smo family. In terms of assembly, interacts with wnt8. In the embryo, expressed in the heart, pronephros and otic vesicles.

The protein localises to the cell membrane. In terms of biological role, receptor for Wnt proteins. Functions in the canonical Wnt/beta-catenin signaling pathway. The canonical Wnt/beta-catenin signaling pathway leads to the activation of disheveled proteins, inhibition of GSK-3 kinase, nuclear accumulation of beta-catenin and activation of Wnt target genes. A second signaling pathway involving PKC and calcium fluxes has been seen for some family members, but it is not yet clear if it represents a distinct pathway or if it can be integrated in the canonical pathway, as PKC seems to be required for Wnt-mediated inactivation of GSK-3 kinase. Both pathways seem to involve interactions with G-proteins. May be involved in transduction and intercellular transmission of polarity information during tissue morphogenesis and/or in differentiated tissues. This chain is Frizzled-1 (fzd1), found in Xenopus laevis (African clawed frog).